Consider the following 444-residue polypeptide: Cell wall mannoprotein PST1 (444 aa).

A signal peptide spans 1–19; it reads MQLHSLIASTALLITSALA. 15 N-linked (GlcNAc...) asparagine glycosylation sites follow: Asn57, Asn76, Asn83, Asn86, Asn196, Asn210, Asn228, Asn235, Asn242, Asn263, Asn268, Asn280, Asn292, Asn305, and Asn329. Low complexity-rich tracts occupy residues 359 to 381 and 395 to 417; these read SVKL…SKSS and KAAA…KSSK. Residues 359–418 form a disordered region; sequence SVKLSSTSKSQSSQTTAKVSKSSSKAEEKKFTSGDIKAAASASSVSSSSASSSSSKSSKG. The GPI-anchor amidated asparagine moiety is linked to residue Asn419. Residues 420-444 constitute a propeptide, removed in mature form; that stretch reads AAIMAPIGQTTPLVGLLTAIIMSIM.

The protein belongs to the SPS2 family. Post-translationally, extensively N- and O-mannosylated.

The protein localises to the cell membrane. Its subcellular location is the secreted. It is found in the cell wall. Has a partially redundant function to ECM33 in cell wall integrity. May be involved in a repair mechanism activated in response to cell wall damage. The polypeptide is Cell wall mannoprotein PST1 (PST1) (Saccharomyces cerevisiae (strain YJM789) (Baker's yeast)).